Consider the following 102-residue polypeptide: Citrate lyase acyl carrier protein (102 aa).

Position 14 is an O-(phosphoribosyl dephospho-coenzyme A)serine (serine 14).

This sequence belongs to the CitD family. As to quaternary structure, oligomer with a subunit composition of (alpha,beta,gamma)6.

Its subcellular location is the cytoplasm. Covalent carrier of the coenzyme of citrate lyase. In Serratia proteamaculans (strain 568), this protein is Citrate lyase acyl carrier protein.